The primary structure comprises 61 residues: Small ribosomal subunit protein uS14 (61 aa).

Cys-24, Cys-27, Cys-40, and Cys-43 together coordinate Zn(2+).

This sequence belongs to the universal ribosomal protein uS14 family. Zinc-binding uS14 subfamily. As to quaternary structure, part of the 30S ribosomal subunit. Contacts proteins S3 and S10. The cofactor is Zn(2+).

In terms of biological role, binds 16S rRNA, required for the assembly of 30S particles and may also be responsible for determining the conformation of the 16S rRNA at the A site. In Bacillus anthracis (strain A0248), this protein is Small ribosomal subunit protein uS14.